An 80-amino-acid polypeptide reads, in one-letter code: Dermaseptin-DA3 (80 aa).

The N-terminal stretch at 1–22 (MAFLKKSLFLVLFLGLVSLSIC) is a signal peptide. Positions 23 to 42 (EEKRENEDEEEQEDDEQSEE) are excised as a propeptide. A disordered region spans residues 24 to 48 (EKRENEDEEEQEDDEQSEEKRGMWS). Over residues 29 to 40 (EDEEEQEDDEQS) the composition is skewed to acidic residues. The residue at position 77 (Leu77) is a Leucine amide. Residues 79–80 (EQ) constitute a propeptide that is removed on maturation.

The protein belongs to the frog skin active peptide (FSAP) family. Dermaseptin subfamily. Expressed by the skin glands.

Its subcellular location is the secreted. Functionally, possesses a potent antimicrobial activity against Gram-positive and Gram-negative bacteria. Probably acts by disturbing membrane functions with its amphipathic structure. In Agalychnis dacnicolor (Giant Mexican leaf frog), this protein is Dermaseptin-DA3.